Consider the following 226-residue polypeptide: Endonuclease V (226 aa).

Residues Asp-43 and Asp-109 each contribute to the Mg(2+) site.

This sequence belongs to the endonuclease V family. The cofactor is Mg(2+).

It is found in the cytoplasm. The catalysed reaction is Endonucleolytic cleavage at apurinic or apyrimidinic sites to products with a 5'-phosphate.. DNA repair enzyme involved in the repair of deaminated bases. Selectively cleaves double-stranded DNA at the second phosphodiester bond 3' to a deoxyinosine leaving behind the intact lesion on the nicked DNA. In Kosmotoga olearia (strain ATCC BAA-1733 / DSM 21960 / TBF 19.5.1), this protein is Endonuclease V.